We begin with the raw amino-acid sequence, 290 residues long: Acetyl-coenzyme A carboxylase carboxyl transferase subunit beta (290 aa).

In terms of domain architecture, CoA carboxyltransferase N-terminal spans 30–290 (IMTKCPKCKK…HAGQEVNKDA (261 aa)). Zn(2+) is bound by residues cysteine 34, cysteine 37, cysteine 53, and cysteine 56. Residues 34–56 (CPKCKKIMYTKELSENLNVCFNC) form a C4-type zinc finger.

This sequence belongs to the AccD/PCCB family. In terms of assembly, acetyl-CoA carboxylase is a heterohexamer composed of biotin carboxyl carrier protein (AccB), biotin carboxylase (AccC) and two subunits each of ACCase subunit alpha (AccA) and ACCase subunit beta (AccD). Zn(2+) serves as cofactor.

It is found in the cytoplasm. It catalyses the reaction N(6)-carboxybiotinyl-L-lysyl-[protein] + acetyl-CoA = N(6)-biotinyl-L-lysyl-[protein] + malonyl-CoA. Its pathway is lipid metabolism; malonyl-CoA biosynthesis; malonyl-CoA from acetyl-CoA: step 1/1. Functionally, component of the acetyl coenzyme A carboxylase (ACC) complex. Biotin carboxylase (BC) catalyzes the carboxylation of biotin on its carrier protein (BCCP) and then the CO(2) group is transferred by the transcarboxylase to acetyl-CoA to form malonyl-CoA. This is Acetyl-coenzyme A carboxylase carboxyl transferase subunit beta from Staphylococcus carnosus (strain TM300).